Here is a 208-residue protein sequence, read N- to C-terminus: FMN-dependent NADH:quinone oxidoreductase (208 aa).

FMN contacts are provided by residues 17-19 (SNS), 99-102 (MWNL), and 143-146 (SRGG).

Belongs to the azoreductase type 1 family. As to quaternary structure, homodimer. Requires FMN as cofactor.

The enzyme catalyses 2 a quinone + NADH + H(+) = 2 a 1,4-benzosemiquinone + NAD(+). It carries out the reaction N,N-dimethyl-1,4-phenylenediamine + anthranilate + 2 NAD(+) = 2-(4-dimethylaminophenyl)diazenylbenzoate + 2 NADH + 2 H(+). Quinone reductase that provides resistance to thiol-specific stress caused by electrophilic quinones. In terms of biological role, also exhibits azoreductase activity. Catalyzes the reductive cleavage of the azo bond in aromatic azo compounds to the corresponding amines. The protein is FMN-dependent NADH:quinone oxidoreductase of Staphylococcus aureus (strain COL).